Here is a 1089-residue protein sequence, read N- to C-terminus: Importin subunit beta-3 (1089 aa).

Residue Ser2 is modified to N-acetylserine. HEAT repeat units lie at residues 6 to 39 (EEVNRTLLQIVQAFASPDNQIRSVAEKALSEEWI), 44 to 78 (IEYLLTFLAEQAAFSQDTTVAALSAVLFRKLALKA), 96 to 129 (KEVLAQIRSSLLKGFLSERADSIRHKLSDAIAEC), 138 to 165 (PELLQALIESLKSGNPNFRESSFRILTT), 175 to 207 (INSILPIFQSGFTDASDNVKIAAVTAFVGYFKQ), 216 to 252 (LGILLPSLLNSLPRFLDDGKDDALASVFESLIELVEL), 260 to 295 (MFDQIIQFTDMVIKNKDLEPPARTTALELLTVFSEN), 304 to 359 (QNYG…ALKL), 361 to 395 (GEYLAAPLFQYLQQMITSTEWRERFAAMMALSSAA), 399 to 439 (ADVL…STDF), 441 to 481 (PFIQ…FSEF), 484 to 524 (KDIL…AEAA), 526 to 568 (NKFI…GFAV), 571 to 613 (EKFH…CRIL), 615 to 689 (DDFV…ATLL), 692 to 735 (QFAV…LLAA), 742 to 781 (ELVLLWHKASSKLIGGLMSEPMPEITQVYHNSLVNGIKVM), 788 to 849 (EDQL…LKTT), 852 to 890 (HYLKNLENIWPMINTFLLDNEPILVIFALVVIGDLIQYG), 898 to 930 (KNAFIPKVTECLISPDARIRQAASYIIGVCAQY), 938 to 978 (VCIP…LYAY), 986 to 1017 (DTYTANWFKTLPTITDKEAASFNYQFLSQLIE), 1028 to 1063 (NISAVVDSVIQALNERSLTEREGQTVISSVKKLLGF), and 1066 to 1089 (SSDAMAIFNRYPADIMEKVHKWFA). Thr830 carries the post-translational modification Phosphothreonine.

The protein belongs to the importin beta family. Importin beta-3 subfamily. In terms of assembly, interacts with Ran (GSP1); interacts specifically with the GTP-bound form of Ran (GTP-Ran), protecting it from GTP hydrolysis and nucleotide exchange. Interacts with RPL25; this interaction is dissociated by binding to Ran-GTP. Interacts with YAP1; this interaction is dissociated by binding to Ran-GTP. Interacts with NOP1; via its rg-NLS. Interacts with SOF1; via its cNLS. Interacts with histones H3 and H4; via their NLS. Interacts with ABF1.

The protein resides in the cytoplasm. Its subcellular location is the nucleus. Its function is as follows. Functions in nuclear protein import as nuclear transport receptor. Serves as receptor for classical and arginine/glycine-rich nuclear localization signals (cNLS and rg-NLS) in cargo substrates. Its predominant cargo substrate seems to be ribosomal proteins and ribosome biogenesis trans- and cis-acting factors. Required for nuclear transport of YAP1, NOP1 and SOF1. Mediates the nuclear import of histones H3 and H4. Mediates docking of the importin/substrate complex to the nuclear pore complex (NPC) through binding to repeat-containing nucleoporins. The complex is subsequently translocated through the pore by an energy requiring, Ran-dependent mechanism. At the nucleoplasmic side of the NPC, GTP-Ran binding leads to release of the cargo. The importin is re-exported from the nucleus to the cytoplasm where GTP hydrolysis releases Ran from importin. The directionality of nuclear import is thought to be conferred by an asymmetric distribution of the GTP- and GDP-bound forms of Ran between the cytoplasm and nucleus. Functionally, plays a role in protein secretion. This Saccharomyces cerevisiae (strain ATCC 204508 / S288c) (Baker's yeast) protein is Importin subunit beta-3.